Reading from the N-terminus, the 107-residue chain is Iron-binding protein IscA (107 aa).

Residues Cys-35, Cys-99, and Cys-101 each coordinate Fe cation.

Belongs to the HesB/IscA family. As to quaternary structure, homodimer; may form tetramers and higher multimers. Requires Fe cation as cofactor.

In terms of biological role, is able to transfer iron-sulfur clusters to apo-ferredoxin. Multiple cycles of [2Fe2S] cluster formation and transfer are observed, suggesting that IscA acts catalytically. Recruits intracellular free iron so as to provide iron for the assembly of transient iron-sulfur cluster in IscU in the presence of IscS, L-cysteine and the thioredoxin reductase system TrxA/TrxB. This is Iron-binding protein IscA from Salmonella newport (strain SL254).